The following is a 295-amino-acid chain: Ribosomal protein L11 methyltransferase (295 aa).

S-adenosyl-L-methionine-binding residues include T146, G167, D189, and N231.

Belongs to the methyltransferase superfamily. PrmA family.

The protein localises to the cytoplasm. The enzyme catalyses L-lysyl-[protein] + 3 S-adenosyl-L-methionine = N(6),N(6),N(6)-trimethyl-L-lysyl-[protein] + 3 S-adenosyl-L-homocysteine + 3 H(+). Methylates ribosomal protein L11. This is Ribosomal protein L11 methyltransferase from Vibrio vulnificus (strain YJ016).